Reading from the N-terminus, the 527-residue chain is Sensory neuron membrane protein 1 (527 aa).

The Cytoplasmic segment spans residues 1–10; it reads MQLQKPLKIG. The helical transmembrane segment at 11-31 threads the bilayer; it reads LGMMGAGLFGIIFGWVLFPVI. Residues 32 to 456 are Extracellular-facing; the sequence is LKSQLKKEMA…LKNQLFIPKR (425 aa). N-linked (GlcNAc...) asparagine glycans are attached at residues asparagine 67 and asparagine 229. 3 cysteine pairs are disulfide-bonded: cysteine 268–cysteine 333, cysteine 297–cysteine 352, and cysteine 335–cysteine 341. Asparagine 440 is a glycosylation site (N-linked (GlcNAc...) asparagine). Residues 457–477 form a helical membrane-spanning segment; that stretch reads IVSVVKWLLAGVGFVGLVGSL. Residues 478–527 lie on the Cytoplasmic side of the membrane; it reads VYQFKGKMINFALSPSSAQVTKVNPEINQQNQPKDISIIGESQNPPKVDM.

It belongs to the CD36 family. As to expression, detected in both male and female antennal tissues. Expression is two to three fold higher in male compared to female antenna.

It is found in the cell membrane. Plays an olfactory role that is not restricted to pheromone sensitivity. This chain is Sensory neuron membrane protein 1, found in Ostrinia furnacalis (Asian corn borer).